Reading from the N-terminus, the 119-residue chain is Ribonuclease P protein component (119 aa).

Belongs to the RnpA family. In terms of assembly, consists of a catalytic RNA component (M1 or rnpB) and a protein subunit.

It catalyses the reaction Endonucleolytic cleavage of RNA, removing 5'-extranucleotides from tRNA precursor.. Functionally, RNaseP catalyzes the removal of the 5'-leader sequence from pre-tRNA to produce the mature 5'-terminus. It can also cleave other RNA substrates such as 4.5S RNA. The protein component plays an auxiliary but essential role in vivo by binding to the 5'-leader sequence and broadening the substrate specificity of the ribozyme. In Yersinia pseudotuberculosis serotype O:1b (strain IP 31758), this protein is Ribonuclease P protein component.